A 78-amino-acid chain; its full sequence is MALSREVFYFGFALFFIVVELPSGSWAGLEYSQSFPGGEIAVCETCRLGRGKCRRTCIESEKIAGWCKLNFFCCRERI.

Positions 1-27 (MALSREVFYFGFALFFIVVELPSGSWA) are cleaved as a signal peptide. Disulfide bonds link Cys46–Cys73, Cys53–Cys67, and Cys57–Cys74.

This sequence belongs to the beta-defensin family. In terms of tissue distribution, only expressed in epididymis (caput, corpus and cauda).

It localises to the secreted. In terms of biological role, has antibacterial activity. This Mus musculus (Mouse) protein is Beta-defensin 12 (Defb12).